A 118-amino-acid chain; its full sequence is Evasin P546 (118 aa).

Residues 1–21 (MKVLLYIAASCLMLLALNVSA) form the signal peptide. Intrachain disulfides connect C38-C59, C55-C96, C72-C101, and C91-C110. N-linked (GlcNAc...) asparagine glycosylation is present at N45.

The protein resides in the secreted. In terms of biological role, salivary chemokine-binding protein which binds to host chemokines CCL1, CCL3, CCL5 and CCL22. The polypeptide is Evasin P546 (Amblyomma cajennense (Cayenne tick)).